A 62-amino-acid polypeptide reads, in one-letter code: MSKELKLYVHRLYEYDYNTGTIKRKNKICPRCGSFMAFHKWPVPRWHCGKCGHTEFVREAKR.

Zn(2+)-binding residues include C29, C32, C48, and C51. The segment at 29–51 (CPRCGSFMAFHKWPVPRWHCGKC) adopts a C4-type zinc-finger fold.

The protein belongs to the eukaryotic ribosomal protein eS31 family. In terms of assembly, part of the 30S ribosomal subunit. Zn(2+) serves as cofactor.

This is Small ribosomal subunit protein eS31 from Hyperthermus butylicus (strain DSM 5456 / JCM 9403 / PLM1-5).